Here is a 74-residue protein sequence, read N- to C-terminus: Kappa-scoloptoxin(07)-Ssm2a (74 aa).

The signal sequence occupies residues 1-19 (MLVFYALLFVTVFSNTVMG). Positions 20–41 (ATIDKPIPKPILREAIEEIEVN) are excised as a propeptide.

This sequence belongs to the scoloptoxin-07 family. Contains 3 disulfide bonds. Expressed by the venom gland.

It is found in the secreted. In terms of biological role, toxin that inhibits voltage-gated potassium channel currents in DRG neurons (IC(50)=about 570 nM). In vivo, induces neurotoxicity shown by twitching, paralysis, and body contraction. In vivo, insects injected with this toxin showed signs of neurotoxicity including twitching, paralysis, and body contraction. The polypeptide is Kappa-scoloptoxin(07)-Ssm2a (Scolopendra mutilans (Chinese red-headed centipede)).